Consider the following 693-residue polypeptide: ATP-dependent DNA helicase RecG (693 aa).

Residues 48 to 146 (THLYPIGELL…GDLSTPELQE (99 aa)) form a wedge domain region. The Helicase ATP-binding domain maps to 283–448 (DMALDVPMMR…AYADLDTSVI (166 aa)). 296-303 (GDVGSGKT) contributes to the ATP binding site. Residues 397-400 (DEQH) carry the DEAH box motif. A Helicase C-terminal domain is found at 482 to 628 (EGRQAYWVCT…GFVIAQKDLE (147 aa)).

The protein belongs to the helicase family. RecG subfamily. As to quaternary structure, monomer in solution. Probably a monomer on HJ DNA. Binding to fork DNA is facilitated by SSB; the proteins do not seem to stably associate. The cofactor is Mg(2+).

It carries out the reaction Couples ATP hydrolysis with the unwinding of duplex DNA by translocating in the 3'-5' direction.. The enzyme catalyses ATP + H2O = ADP + phosphate + H(+). Its function is as follows. Plays a critical role in recombination and DNA repair. Helps process Holliday junction (HJ) intermediates to mature products by catalyzing branch migration. Has replication fork regression activity, unwinds stalled or blocked replication forks to make a HJ that can be resolved by RuvC or RusA. Also rewinds unwound dsDNA in an ATP-dependent manner. Has double-stranded (ds)DNA unwinding activity characteristic of a DNA helicase with 3'-5' polarity in vitro on linear dsDNA; branched duplex DNA (Y-DNA) substrates adopt different conformations that influence which of the two arms are unwound. Binds and unwinds HJ and Y-DNA but not linear duplex DNA; binds no more than 10 nucleotides of ssDNA at a fork. Has a role in constitutive stable DNA replication (cSDR, DNA replication in the absence of protein synthesis) and R-loop (RNA annealed with dsDNA) formation. Unwinds R-loops but not RNA:DNA hybrids. Is genetically synergistic to RadA and RuvABC. The chain is ATP-dependent DNA helicase RecG from Escherichia coli (strain K12).